A 193-amino-acid chain; its full sequence is Inner membrane protein p54 (193 aa).

Residues tyrosine 32–phenylalanine 52 form a helical membrane-spanning segment. A disordered region spans residues proline 84 to arginine 126. 4 tandem repeats follow at residues alanine 135–serine 138, alanine 139–serine 142, alanine 143–serine 146, and alanine 147–serine 150. The tract at residues alanine 135–serine 150 is 4 X 4 AA tandem repeats of A-A-A-S. Positions tyrosine 159–threonine 171 are interaction with host DYNLL1.

It belongs to the asfivirus envelope protein p54 family. In terms of assembly, interacts with the host light chain cytoplasmic dynein DYNLL1; this interaction is critical for intracellular microtubule-dependent virus transport toward viral factories.

The protein localises to the virion membrane. Its subcellular location is the host cytoplasm. It is found in the host cytoskeleton. It localises to the host endoplasmic reticulum membrane. Its function is as follows. Inner envelope protein involved, through its interaction with host dynein, in the intracellular microtubule-dependent transport of viral capsid toward viral factories. Seems to induce caspase-3 activation and apoptosis. Plays a role in virion morphogenesis by recruiting and transforming the host ER membranes into the precursors of the viral envelope. Involved in virus attachment to the host cell. The chain is Inner membrane protein p54 from Ornithodoros (relapsing fever ticks).